The primary structure comprises 800 residues: MGQKVHPSGFRVGITKKHQSQWFARFNKNKYSQTVLEDRMIRDTLNKLFPELLNPSTKGGSAPKRHQNARIKKSRITQIKIERNIVPYQIGIQIHAENCKLLKSSIKNLQVKKDILVKLQKTRQYLTNLKIKLDKLTNAPAETQVKTNFEDSTKRSVGQLELSHEGLNTKLSKIKSLRKKLAKLKTGTSTTRANTTGTRQKKLSSKTKRSISQLLKMKLLRAKLAKLVQPKLKRKALEASTIEKTTAKTLKTKKKVSLKRKNKFETKLTKRQLKRQRVFKKRLKLRKFIRLRDRLLISKGLFLQKKGHKITKKIVLAPTPKFLKDFSLNPKVYLLPVKRIEKLLTPKKAAKGGQKSAAVKTVRTSLQTNIYNSRIQKKFVTMYVEQMKKKFLPHLNELFLEYTSKGFDSNNKAVLSLGYMKQWDFERRVDNLKVQPIEKLDRLVHNLRDKFVMKLNLLRKDFITFGSFSSNSADILGLFQLYNFLMKLKNLVNGLKLNLKHKIKTRLAISKMNGSLNTSRNEPELRSRETSQASDKLRIVDSTNSSLPQKVFRKKLENISNEYRKMKFIEYLKDVVQKHRTDNIYLYLASISESRRKLKEIKNEVKQHLDLYLPGANSIKELNQKSSEDSINLATNEVNNVLMKLAKKHPFDRTFLDCKFEELERRKTMWVQNLQLVPKISIKFFSVNQKALNLKASIVSESVVDALEKRKAFRKVIKTTKENLMRNSEIKGVKIQVAGRLNGAEIARTEWVRAGRVPLQTLRANLDYSYRTANTIYGIIGVKVWIFKGFTKLVTESTGA.

The tract at residues 1–118 (MGQKVHPSGF…LQVKKDILVK (118 aa)) is S3-like 1st part. The intervening sequence (IVS) stretch occupies residues 119–664 (LQKTRQYLTN…FLDCKFEELE (546 aa)). The segment at 665–800 (RRKTMWVQNL…TKLVTESTGA (136 aa)) is S3-like 2nd part.

This sequence belongs to the universal ribosomal protein uS3 family. As to quaternary structure, part of the 30S ribosomal subunit.

The protein localises to the plastid. It localises to the chloroplast. The sequence is that of Small ribosomal subunit protein uS3c (rps3) from Chlamydomonas moewusii (Chlamydomonas eugametos).